Consider the following 320-residue polypeptide: Citrate synthase (320 aa).

Catalysis depends on residues His249 and Asp307.

It belongs to the citrate synthase family.

It carries out the reaction oxaloacetate + acetyl-CoA + H2O = citrate + CoA + H(+). It participates in carbohydrate metabolism; tricarboxylic acid cycle; isocitrate from oxaloacetate: step 1/2. The polypeptide is Citrate synthase (gltA) (Bartonella doshiae).